A 302-amino-acid chain; its full sequence is MVTINNAHSELIHDAVLDYYGKRLATCSSDHTVKIFEVEGETHKLVDTLQGHEGPVWQVDWAHPKFGVILASCSYDGKVLIWKEVNGRWSQIAAHEVHSASVNSIQWAPHEYGPLLLAASSDGKVSVVEFKENGTTSPIIIDAHSIGANTACWAPATLQQQSNQGTSGSASPQQVRRFVTGGADNLVKIWKYNSDAATYLLEHTLEGHSDWVRDVAWSPTVLSRSYLASVSQDRTCIIWTQDSKEDTWKKTLLKEDKFPDVLWRASWSLSGNILALSCGDNTVTLWKENLEGKWEPAGQVTE.

WD repeat units follow at residues 7–46 (AHSE…HKLV), 51–92 (GHEG…WSQI), 97–138 (VHSA…TTSP), 160–200 (QQSN…ATYL), 207–249 (GHSD…DTWK), and 257–296 (KFPD…KWEP).

It belongs to the WD repeat SEC13 family. The COPII coat is composed of at least 5 proteins: the SEC23/24 complex, the SEC13/31 complex, and the protein SAR1. Component of the nuclear pore complex (NPC). NPC constitutes the exclusive means of nucleocytoplasmic transport. NPCs allow the passive diffusion of ions and small molecules and the active, nuclear transport receptor-mediated bidirectional transport of macromolecules such as proteins, RNAs, ribonucleoparticles (RNPs), and ribosomal subunits across the nuclear envelope. Due to its 8-fold rotational symmetry, all subunits are present with 8 copies or multiples thereof.

Its subcellular location is the cytoplasmic vesicle. The protein resides in the COPII-coated vesicle membrane. It is found in the endoplasmic reticulum membrane. The protein localises to the nucleus. It localises to the nuclear pore complex. Its function is as follows. Component of the coat protein complex II (COPII) which promotes the formation of transport vesicles from the endoplasmic reticulum (ER). The coat has two main functions, the physical deformation of the endoplasmic reticulum membrane into vesicles and the selection of cargo molecules. It also functions as a component of the nuclear pore complex (NPC). NPC components, collectively referred to as nucleoporins (NUPs), can play the role of both NPC structural components and of docking or interaction partners for transiently associated nuclear transport factors. SEC13 is required for efficient mRNA export from the nucleus to the cytoplasm and for correct nuclear pore biogenesis and distribution. The chain is Protein transport protein SEC13 (SEC13) from Kluyveromyces lactis (strain ATCC 8585 / CBS 2359 / DSM 70799 / NBRC 1267 / NRRL Y-1140 / WM37) (Yeast).